The following is a 92-amino-acid chain: Small ribosomal subunit protein uS19 (92 aa).

It belongs to the universal ribosomal protein uS19 family.

Functionally, protein S19 forms a complex with S13 that binds strongly to the 16S ribosomal RNA. In Bartonella henselae (strain ATCC 49882 / DSM 28221 / CCUG 30454 / Houston 1) (Rochalimaea henselae), this protein is Small ribosomal subunit protein uS19.